Consider the following 85-residue polypeptide: Prosialokinin (85 aa).

The first 23 residues, 1–23 (MNMFITVQIVIVLVLAVLSEAAS), serve as a signal peptide directing secretion. A propeptide spanning residues 24 to 74 (LPTATERKDAMDEGPNQSDEPEGSVADPSTKDDDYSDSLKQDEKYYKVRLL) is cleaved from the precursor. The interval 26-61 (TATERKDAMDEGPNQSDEPEGSVADPSTKDDDYSDS) is disordered. The span at 52-61 (STKDDDYSDS) shows a compositional bias: basic and acidic residues. Met-84 is subject to Methionine amide.

This sequence belongs to the tachykinin family. Expressed exclusively in the medial lobe of female salivary gland. Not detected in female carcass without head and salivary glands. Not detected in male tissues.

The protein resides in the secreted. In terms of biological role, vasodilatory peptide. Facilitates mosquito blood feeding on vertebrate host. Induces nitric oxide (NO) release in blood vessels through the activation of the nitric oxide synthase (NOS3). Enhances endothelial permeability and induces edema at the site of inoculation in the host. Induces host smooth muscle contraction. Down-regulates production of Th1 cytokines, such as IL2 and IFN-gamma (IFNG), in mouse splenocytes. Up-regulates production of Th2 cytokines, such as IL4 and IL10, in mouse splenocytes. Promotes recruitment of host leukocytes, especially neutrophils and CD8+ T cells, to the bite site. Modulates cytokine production by host macrophages. Modulates populations of monocytes/macrophages, plasmacytoid dendritic cells, B cells, CD4+ T cells, NK and NKT cells, shifting mammalian immunity towards Th2 responses. Its function is as follows. (Microbial infection) Promotes Semliki Forest virus infection in the host. Functionally, (Microbial infection) Does not affect Zika virus replication in the host. The protein is Prosialokinin of Aedes aegypti (Yellowfever mosquito).